Reading from the N-terminus, the 76-residue chain is Protein MATERNALLY EXPRESSED GENE 4 (76 aa).

Positions 1-27 are cleaved as a signal peptide; the sequence is MEYRKRVDALVFFSLLLLGYFAAHAHG. Cysteines 53 and 75 form a disulfide.

This sequence belongs to the MEG family. In terms of tissue distribution, expressed exclusively in endosperm.

In Zea mays (Maize), this protein is Protein MATERNALLY EXPRESSED GENE 4 (MEG4).